We begin with the raw amino-acid sequence, 861 residues long: Glucans biosynthesis glucosyltransferase H (861 aa).

Disordered regions lie at residues 65-89 (RLSAREPAKGETPEPGGSTYGSVGR) and 101-129 (AGEPLLKRRPDGTVHVDTGPEPQRSSMVP). Basic and acidic residues-rich tracts occupy residues 67-76 (SAREPAKGET) and 105-114 (LLKRRPDGTV). The next 6 membrane-spanning stretches (helical) occupy residues 181 to 201 (FLLGLVVAQTTLATYFMTKVL), 208 to 228 (LLEIAILVLFAVLFSWVSAGF), 532 to 552 (VFLTGIMAYLSAPLWFLFLLL), 589 to 609 (LFSATATLLFLPKVASILLLV), 616 to 636 (GGLPRLVMSMLIEVVLSALLA), and 698 to 718 (FVLWLLPIVGSLALSIPLSVM).

It belongs to the glycosyltransferase 2 family. OpgH subfamily.

It localises to the cell inner membrane. The protein operates within glycan metabolism; osmoregulated periplasmic glucan (OPG) biosynthesis. Functionally, involved in the biosynthesis of osmoregulated periplasmic glucans (OPGs). This is Glucans biosynthesis glucosyltransferase H from Cupriavidus pinatubonensis (strain JMP 134 / LMG 1197) (Cupriavidus necator (strain JMP 134)).